Here is a 553-residue protein sequence, read N- to C-terminus: Serine/threonine-protein phosphatase 2B catalytic subunit A1 (553 aa).

Residue Ser-2 is modified to N-acetylserine. Fe cation is bound by residues Asp-119, His-121, and Asp-147. Positions 147 and 179 each coordinate Zn(2+). His-180 functions as the Proton donor in the catalytic mechanism. Residues His-228 and His-317 each coordinate Zn(2+). A disordered region spans residues 413–447; the sequence is LDPESEPKAAEETVKARANATKETGTPSDEKASSA. Positions 417–427 are enriched in basic and acidic residues; that stretch reads SEPKAAEETVK.

The protein belongs to the PPP phosphatase family. PP-2B subfamily. Composed of two components (A and B), the A component is the catalytic subunit and the B component confers calcium sensitivity. It depends on Fe(3+) as a cofactor. Requires Zn(2+) as cofactor.

It catalyses the reaction O-phospho-L-seryl-[protein] + H2O = L-seryl-[protein] + phosphate. It carries out the reaction O-phospho-L-threonyl-[protein] + H2O = L-threonyl-[protein] + phosphate. Calcium-dependent, calmodulin-stimulated protein phosphatase. This subunit may have a role in the calmodulin activation of calcineurin. The chain is Serine/threonine-protein phosphatase 2B catalytic subunit A1 (CNA1) from Saccharomyces cerevisiae (strain ATCC 204508 / S288c) (Baker's yeast).